We begin with the raw amino-acid sequence, 331 residues long: MRGYLVAIFLSAVFLYYVLHCILWGTNVYWVAPVEMKRRNKIQPCLSKPAFASLLRFHQFHPFLCAADFRKIASLYGSDKFDLPYGMRTSAEYFRLALSKLQSCDLFDEFDNIPCKKCVVVGNGGVLKNKTLGEKIDSYDVIIRMNNGPVLGHEEEVGRRTTFRLFYPESVFSDPIHNDPNTTVILTAFKPHDLRWLLELLMGDKINTNGFWKKPALNLIYKPYQIRILDPFIIRTAAYELLHFPKVFPKNQKPKHPTTGIIAITLAFYICHEVHLAGFKYNFSDLKSPLHYYGNATMSLMNKNAYHNVTAEQLFLKDIIEKNLVINLTQD.

Residues 1 to 4 (MRGY) lie on the Cytoplasmic side of the membrane. Residues 5–25 (LVAIFLSAVFLYYVLHCILWG) traverse the membrane as a helical; Signal-anchor for type II membrane protein segment. Topologically, residues 26 to 331 (TNVYWVAPVE…KNLVINLTQD (306 aa)) are lumenal. Asparagine 129, asparagine 181, asparagine 282, asparagine 295, asparagine 308, and asparagine 327 each carry an N-linked (GlcNAc...) asparagine glycan.

This sequence belongs to the glycosyltransferase 29 family. Ubiquitous.

It localises to the golgi apparatus membrane. It carries out the reaction a neolactoside nLc4Cer(d18:1(4E)) + CMP-N-acetyl-beta-neuraminate = a neolactoside IV(3)-alpha-NeuAc-nLc4Cer(d18:1(4E)) + CMP + H(+). The enzyme catalyses a beta-D-galactosyl-(1-&gt;4)-N-acetyl-beta-D-glucosaminyl derivative + CMP-N-acetyl-beta-neuraminate = an N-acetyl-alpha-neuraminyl-(2-&gt;3)-beta-D-galactosyl-(1-&gt;4)-N-acetyl-beta-D-glucosaminyl derivative + CMP + H(+). The catalysed reaction is a neolactoside nLc6Cer(d18:1(4E)) + CMP-N-acetyl-beta-neuraminate = a neolactoside VI(3)-alpha-NeuNAc-nLc6Cer(d18:1(4E)) + CMP + H(+). Transfers the sialyl residue from CMP-N-acetyl-beta-neuraminate to the terminal galactose residue on sugar chains of glycoproteins and glycolipids. It's alpha-2,3-sialyltransferase activity is specific toward type II glycan chains (Galbeta1-4GlcNAc) on glycoproteins and glycolipids such as neolactosides nLc4Cer and nLc6Cer, whose sialyl-products serve as precursors for the Lewis X antigen. Critically involved in the synthesis of functional selectin ligands needed for neutrophil recruitment during inflammation and lymphocyte homing to the lymph nodes. This is Type 2 lactosamine alpha-2,3-sialyltransferase (ST3GAL6) from Homo sapiens (Human).